We begin with the raw amino-acid sequence, 201 residues long: Large ribosomal subunit protein uL4 (201 aa).

Residues 43 to 73 (SRGQKTRAEVTGSGKKPWRQKGTGRARSGSV) are disordered.

The protein belongs to the universal ribosomal protein uL4 family. In terms of assembly, part of the 50S ribosomal subunit.

In terms of biological role, one of the primary rRNA binding proteins, this protein initially binds near the 5'-end of the 23S rRNA. It is important during the early stages of 50S assembly. It makes multiple contacts with different domains of the 23S rRNA in the assembled 50S subunit and ribosome. Functionally, forms part of the polypeptide exit tunnel. This Sodalis glossinidius (strain morsitans) protein is Large ribosomal subunit protein uL4.